A 926-amino-acid polypeptide reads, in one-letter code: Eukaryotic translation initiation factor 3 subunit C (926 aa).

Disordered regions lie at residues 1–27, 157–251, and 266–300; these read MSRFFATGSDSESEESSSADEITPKAA, ASYK…NDGT, and EKASDRKKDDRRRRHKKKERIEEEAEEEGEAEEGG. Basic and acidic residues predominate over residues 200–210; that stretch reads KPQEEEKKAPE. The span at 220–235 shows a compositional bias: acidic residues; that stretch reads DEESESDDDEDSEDWA. A compositionally biased stretch (basic residues) spans 274-283; the sequence is DDRRRRHKKK. A compositionally biased stretch (acidic residues) spans 287–299; sequence EEEAEEEGEAEEG. Residues 672–848 enclose the PCI domain; it reads FHMHINLELL…QTVVMHRTEP (177 aa). Residues 890–919 are compositionally biased toward low complexity; it reads GGYQQKQGYQRGDQKGGYQQKQNYQRGGYR. The interval 890–926 is disordered; the sequence is GGYQQKQGYQRGDQKGGYQQKQNYQRGGYRNQNQSSY.

The protein belongs to the eIF-3 subunit C family. In terms of assembly, component of the eukaryotic translation initiation factor 3 (eIF-3) complex, which is composed of 13 subunits: eif3a, eif3b, eif3c, eif3d, eif3e, eif3f, eif3g, eif3h, eif3i, eif3j, eif3k, eif3l and eif3m.

It is found in the cytoplasm. Component of the eukaryotic translation initiation factor 3 (eIF-3) complex, which is involved in protein synthesis of a specialized repertoire of mRNAs and, together with other initiation factors, stimulates binding of mRNA and methionyl-tRNAi to the 40S ribosome. The eIF-3 complex specifically targets and initiates translation of a subset of mRNAs involved in cell proliferation. The chain is Eukaryotic translation initiation factor 3 subunit C (eif3c) from Danio rerio (Zebrafish).